We begin with the raw amino-acid sequence, 193 residues long: RNA pyrophosphohydrolase (193 aa).

Residues Gly-6–Gln-149 enclose the Nudix hydrolase domain. The Nudix box signature appears at Gly-38–Gly-59. The disordered stretch occupies residues Thr-174–Glu-193.

Belongs to the Nudix hydrolase family. RppH subfamily. Requires a divalent metal cation as cofactor.

Functionally, accelerates the degradation of transcripts by removing pyrophosphate from the 5'-end of triphosphorylated RNA, leading to a more labile monophosphorylated state that can stimulate subsequent ribonuclease cleavage. The chain is RNA pyrophosphohydrolase from Herminiimonas arsenicoxydans.